A 412-amino-acid polypeptide reads, in one-letter code: Eukaryotic initiation factor 4A-1 (412 aa).

A2 carries the N-acetylalanine modification. Positions 39-67 (ESFDAMGLQENLLRGIYAYGFEKPSAIQQ) match the Q motif motif. Residues 70–240 (IVPFCKGLDV…RKFMSKPVRI (171 aa)) enclose the Helicase ATP-binding domain. 83–90 (AQSGTGKT) is an ATP binding site. S104 carries the phosphoserine modification. T145 carries the post-translational modification Phosphothreonine. Positions 188-191 (DEAD) match the DEAD box motif. Residues 251–412 (GIKQFYVNVE…ELPSNVADLL (162 aa)) form the Helicase C-terminal domain.

It belongs to the DEAD box helicase family. eIF4A subfamily. In terms of assembly, eIF4F is a multi-subunit complex, the composition of which varies with external and internal environmental conditions. It is composed of at least EIF4A, EIF4E and EIF4G. Interacts with CDKA-1. Interacts with MRF1, MRF2, MRF3/ECIP1 and MRF4. As to expression, highly expressed in the whole plant.

It is found in the cytoplasm. It catalyses the reaction ATP + H2O = ADP + phosphate + H(+). Functionally, ATP-dependent RNA helicase which is a subunit of the eIF4F complex involved in cap recognition and is required for mRNA binding to ribosome. In the current model of translation initiation, eIF4A unwinds RNA secondary structures in the 5'-UTR of mRNAs which is necessary to allow efficient binding of the small ribosomal subunit, and subsequent scanning for the initiator codon. The polypeptide is Eukaryotic initiation factor 4A-1 (Arabidopsis thaliana (Mouse-ear cress)).